We begin with the raw amino-acid sequence, 815 residues long: Patatin-like phospholipase domain-containing protein LELG_00944 (815 aa).

Positions 41–50 (VSTTAPTTPL) are enriched in polar residues. Disordered stretches follow at residues 41 to 105 (VSTT…PQLK) and 140 to 166 (SENL…STSP). Residues 54-73 (LDMGDLSLLGGELGNGSDDV) show a composition bias toward low complexity. Over residues 74-94 (VVGDDDDDDDDDDDDDDDDDD) the composition is skewed to acidic residues. A compositionally biased stretch (basic residues) spans 148–160 (KRTKFAKSSKSSK). Residues 185-205 (WPILTFVVIWVTILGFLYLAV) traverse the membrane as a helical segment. In terms of domain architecture, PNPLA spans 360–552 (LCLSGGACFA…RTDIPIDALN (193 aa)). The short motif at 391-395 (GTSGG) is the GXSXG element. Serine 393 acts as the Nucleophile in catalysis. Aspartate 539 (proton acceptor) is an active-site residue. The tract at residues 753–815 (GSTLRDDDAD…LTKERRHTVY (63 aa)) is disordered. The span at 759 to 799 (DDADADVDEDDNEDEDEEDEDENDYEEYDVEDLDDPYESDA) shows a compositional bias: acidic residues.

The protein belongs to the PLPL family.

Its subcellular location is the membrane. Its function is as follows. Probable lipid hydrolase. This is Patatin-like phospholipase domain-containing protein LELG_00944 from Lodderomyces elongisporus (strain ATCC 11503 / CBS 2605 / JCM 1781 / NBRC 1676 / NRRL YB-4239) (Yeast).